A 456-amino-acid polypeptide reads, in one-letter code: CCA-adding enzyme (456 aa).

Residues serine 53 and lysine 56 each coordinate ATP. CTP-binding residues include serine 53 and lysine 56. 3 residues coordinate Mg(2+): aspartate 65, aspartate 67, and aspartate 119. Histidine 142, lysine 161, and tyrosine 170 together coordinate ATP. Residues histidine 142, lysine 161, and tyrosine 170 each contribute to the CTP site.

This sequence belongs to the tRNA nucleotidyltransferase/poly(A) polymerase family. Archaeal CCA-adding enzyme subfamily. In terms of assembly, homodimer. It depends on Mg(2+) as a cofactor.

It catalyses the reaction a tRNA precursor + 2 CTP + ATP = a tRNA with a 3' CCA end + 3 diphosphate. The catalysed reaction is a tRNA with a 3' CCA end + 2 CTP + ATP = a tRNA with a 3' CCACCA end + 3 diphosphate. Its function is as follows. Catalyzes the addition and repair of the essential 3'-terminal CCA sequence in tRNAs without using a nucleic acid template. Adds these three nucleotides in the order of C, C, and A to the tRNA nucleotide-73, using CTP and ATP as substrates and producing inorganic pyrophosphate. tRNA 3'-terminal CCA addition is required both for tRNA processing and repair. Also involved in tRNA surveillance by mediating tandem CCA addition to generate a CCACCA at the 3' terminus of unstable tRNAs. While stable tRNAs receive only 3'-terminal CCA, unstable tRNAs are marked with CCACCA and rapidly degraded. This Thermococcus kodakarensis (strain ATCC BAA-918 / JCM 12380 / KOD1) (Pyrococcus kodakaraensis (strain KOD1)) protein is CCA-adding enzyme.